The chain runs to 313 residues: Protease HtpX homolog (313 aa).

2 helical membrane passes run Ala-7–Ile-24 and Gly-29–Trp-46. His-130 serves as a coordination point for Zn(2+). Glu-131 is a catalytic residue. Position 134 (His-134) interacts with Zn(2+). The next 2 membrane-spanning stretches (helical) occupy residues Ile-145–Gly-165 and Pro-172–Val-192. Zn(2+) is bound at residue Glu-201. Positions Gly-282–Ser-313 are disordered.

This sequence belongs to the peptidase M48B family. Requires Zn(2+) as cofactor.

It is found in the cell inner membrane. This is Protease HtpX homolog from Chelativorans sp. (strain BNC1).